A 126-amino-acid polypeptide reads, in one-letter code: Probable 4-amino-4-deoxy-L-arabinose-phosphoundecaprenol flippase subunit ArnF (126 aa).

A helical membrane pass occupies residues 1-21 (MGFFWALLSVGLVSAAQLLLR). Topologically, residues 22–47 (SAMVALPPLTDIVAFLQHLLHFQPGT) are periplasmic. The helical transmembrane segment at 48–68 (FGLFFGLLGYLLSMVCWYFAL) threads the bilayer. Residues 69 to 76 (HRLPLSKA) lie on the Cytoplasmic side of the membrane. A helical transmembrane segment spans residues 77-97 (YALLSLSYILVWAAAIWLPGW). The Periplasmic portion of the chain corresponds to 98-100 (HEP). A helical membrane pass occupies residues 101–121 (FYWQSLLGVAIIVAGVLTIFW). At 122-126 (PVKRR) the chain is on the cytoplasmic side.

Belongs to the ArnF family. Heterodimer of ArnE and ArnF.

It is found in the cell inner membrane. It participates in bacterial outer membrane biogenesis; lipopolysaccharide biosynthesis. In terms of biological role, translocates 4-amino-4-deoxy-L-arabinose-phosphoundecaprenol (alpha-L-Ara4N-phosphoundecaprenol) from the cytoplasmic to the periplasmic side of the inner membrane. The polypeptide is Probable 4-amino-4-deoxy-L-arabinose-phosphoundecaprenol flippase subunit ArnF (Klebsiella pneumoniae subsp. pneumoniae (strain ATCC 700721 / MGH 78578)).